The following is an 81-amino-acid chain: Photosystem I iron-sulfur center (81 aa).

4Fe-4S ferredoxin-type domains are found at residues 2 to 31 (SHAV…MVPW) and 39 to 68 (IASS…IRVY). Cys11, Cys14, Cys17, Cys21, Cys48, Cys51, Cys54, and Cys58 together coordinate [4Fe-4S] cluster.

As to quaternary structure, the cyanobacterial PSI reaction center is composed of one copy each of PsaA,B,C,D,E,F,I,J,K,L,M and X, and forms trimeric complexes. [4Fe-4S] cluster is required as a cofactor.

It is found in the cellular thylakoid membrane. It carries out the reaction reduced [plastocyanin] + hnu + oxidized [2Fe-2S]-[ferredoxin] = oxidized [plastocyanin] + reduced [2Fe-2S]-[ferredoxin]. Functionally, apoprotein for the two 4Fe-4S centers FA and FB of photosystem I (PSI); essential for photochemical activity. FB is the terminal electron acceptor of PSI, donating electrons to ferredoxin. The C-terminus interacts with PsaA/B/D and helps assemble the protein into the PSI complex. Required for binding of PsaD and PsaE to PSI. PSI is a plastocyanin/cytochrome c6-ferredoxin oxidoreductase, converting photonic excitation into a charge separation, which transfers an electron from the donor P700 chlorophyll pair to the spectroscopically characterized acceptors A0, A1, FX, FA and FB in turn. In Prochlorococcus marinus (strain MIT 9312), this protein is Photosystem I iron-sulfur center.